Reading from the N-terminus, the 94-residue chain is Small ribosomal subunit protein uS19m (94 aa).

It belongs to the universal ribosomal protein uS19 family.

Its subcellular location is the mitochondrion. The protein is Small ribosomal subunit protein uS19m (RPS19) of Petunia hybrida (Petunia).